The primary structure comprises 120 residues: Large ribosomal subunit protein uL18 (120 aa).

The protein belongs to the universal ribosomal protein uL18 family. As to quaternary structure, part of the 50S ribosomal subunit; part of the 5S rRNA/L5/L18/L25 subcomplex. Contacts the 5S and 23S rRNAs.

Its function is as follows. This is one of the proteins that bind and probably mediate the attachment of the 5S RNA into the large ribosomal subunit, where it forms part of the central protuberance. The polypeptide is Large ribosomal subunit protein uL18 (Staphylococcus saprophyticus subsp. saprophyticus (strain ATCC 15305 / DSM 20229 / NCIMB 8711 / NCTC 7292 / S-41)).